Reading from the N-terminus, the 147-residue chain is uncharacterized protein (147 aa).

This sequence belongs to the limonene-1,2-epoxide hydrolase family.

This is an uncharacterized protein from Bacillus subtilis (strain 168).